We begin with the raw amino-acid sequence, 176 residues long: Dual-action ribosomal maturation protein DarP (176 aa).

Over residues 1–10 (MTVPNHQQDI) the composition is skewed to polar residues. The disordered stretch occupies residues 1–22 (MTVPNHQQDISDSDLESRPSKT).

Belongs to the DarP family.

The protein resides in the cytoplasm. Its function is as follows. Member of a network of 50S ribosomal subunit biogenesis factors which assembles along the 30S-50S interface, preventing incorrect 23S rRNA structures from forming. Promotes peptidyl transferase center (PTC) maturation. The protein is Dual-action ribosomal maturation protein DarP of Nitrosomonas eutropha (strain DSM 101675 / C91 / Nm57).